The following is a 134-amino-acid chain: MEEDTNISNKVIRYNTVNNIWETLPNFWTGTINPGVVSHKDDIYVVCDIKDEKNVKTCIFRYNTNTYNGWELVTTTESRLSALHTILYNNTIMMLHCYESYMLQDTFNVYTREWNHMCHQHSNSYIMYNILPIY.

The protein belongs to the orthopoxviruses B21 protein family.

This is an uncharacterized protein from Bos taurus (Bovine).